A 381-amino-acid chain; its full sequence is Cytochrome b (381 aa).

4 helical membrane-spanning segments follow: residues 34–54, 78–99, 114–134, and 179–199; these read FGSLLGLCLIIQIVTGLFLAM, WLIRNIHANGASLFFVCVYIHI, WNIGVILLFLLMATAFVGYVL, and FFAFHFLLPFLITALMVIHVL. The heme b site is built by His-84 and His-98. Heme b contacts are provided by His-183 and His-197. His-202 contacts a ubiquinone. The next 4 membrane-spanning stretches (helical) occupy residues 227 to 247, 289 to 309, 321 to 341, and 348 to 368; these read YKDALGFLTLLILLGALALFL, LGGVLALLFSILILLLVPLLH, LTQVFFWILVTNMLVLTWIGG, and FILIGQIASITYFSLFLIAMP.

This sequence belongs to the cytochrome b family. As to quaternary structure, the cytochrome bc1 complex contains 3 respiratory subunits (MT-CYB, CYC1 and UQCRFS1), 2 core proteins (UQCRC1 and UQCRC2) and probably 6 low-molecular weight proteins. Heme b is required as a cofactor.

The protein localises to the mitochondrion inner membrane. Its function is as follows. Component of the ubiquinol-cytochrome c reductase complex (complex III or cytochrome b-c1 complex) that is part of the mitochondrial respiratory chain. The b-c1 complex mediates electron transfer from ubiquinol to cytochrome c. Contributes to the generation of a proton gradient across the mitochondrial membrane that is then used for ATP synthesis. This chain is Cytochrome b (mt-cyb), found in Isurus paucus (Longfin mako shark).